The following is a 156-amino-acid chain: Probable succinate transporter subunit YjjB (156 aa).

4 helical membrane-spanning segments follow: residues 7-27 (WALLQDMALAAVPALGFAMVF), 54-74 (FGMNIEWASFLAAILIGIIGI), 86-106 (VFTVAAVIPMFPGISAYTAMI), and 128-148 (FLKASFIVGALSIGLSLPGIW).

This sequence belongs to the ThrE exporter (TC 2.A.79) family. In terms of assembly, the transporter is composed of YjjB and YjjP.

It localises to the cell inner membrane. In terms of biological role, involved in succinate export with YjjP. Both proteins are required for export. In Pectobacterium carotovorum subsp. carotovorum (strain PC1), this protein is Probable succinate transporter subunit YjjB.